Reading from the N-terminus, the 670-residue chain is UvrABC system protein B (670 aa).

Positions 26 to 183 (EGLENGLAHQ…RRLSELQYSR (158 aa)) constitute a Helicase ATP-binding domain. 39–46 (GVTGSGKT) contacts ATP. Positions 92–115 (YYDYYQPEAYVPSSDTFIEKDASV) match the Beta-hairpin motif. One can recognise a Helicase C-terminal domain in the interval 431-597 (QVDDLLSEIR…GLNKKIGDIL (167 aa)). Positions 600–620 (GQPSTRGKGKGRGGKVADTNN) are disordered. Residues 630 to 665 (DQKIRELEAKMYTHAQNLEFEQAAELRDQVHQLRQQ) enclose the UVR domain.

Belongs to the UvrB family. Forms a heterotetramer with UvrA during the search for lesions. Interacts with UvrC in an incision complex.

It is found in the cytoplasm. Functionally, the UvrABC repair system catalyzes the recognition and processing of DNA lesions. A damage recognition complex composed of 2 UvrA and 2 UvrB subunits scans DNA for abnormalities. Upon binding of the UvrA(2)B(2) complex to a putative damaged site, the DNA wraps around one UvrB monomer. DNA wrap is dependent on ATP binding by UvrB and probably causes local melting of the DNA helix, facilitating insertion of UvrB beta-hairpin between the DNA strands. Then UvrB probes one DNA strand for the presence of a lesion. If a lesion is found the UvrA subunits dissociate and the UvrB-DNA preincision complex is formed. This complex is subsequently bound by UvrC and the second UvrB is released. If no lesion is found, the DNA wraps around the other UvrB subunit that will check the other stand for damage. This is UvrABC system protein B from Yersinia enterocolitica serotype O:8 / biotype 1B (strain NCTC 13174 / 8081).